We begin with the raw amino-acid sequence, 244 residues long: Uridylate kinase (244 aa).

17-20 (KVSG) serves as a coordination point for ATP. An involved in allosteric activation by GTP region spans residues 25 to 30 (GDKGFG). Gly-59 serves as a coordination point for UMP. ATP is bound by residues Gly-60 and Arg-64. UMP contacts are provided by residues Asp-80 and 141–148 (VGNPFFTT). Thr-168, Gln-169, Tyr-174, and Asp-177 together coordinate ATP.

The protein belongs to the UMP kinase family. As to quaternary structure, homohexamer.

The protein resides in the cytoplasm. The catalysed reaction is UMP + ATP = UDP + ADP. The protein operates within pyrimidine metabolism; CTP biosynthesis via de novo pathway; UDP from UMP (UMPK route): step 1/1. With respect to regulation, allosterically activated by GTP. Inhibited by UTP. Functionally, catalyzes the reversible phosphorylation of UMP to UDP. The polypeptide is Uridylate kinase (Ehrlichia ruminantium (strain Welgevonden)).